Reading from the N-terminus, the 508-residue chain is Photosystem II CP47 reaction center protein (508 aa).

6 helical membrane passes run 21 to 36, 101 to 115, 140 to 156, 203 to 218, 237 to 252, and 457 to 472; these read SVHI…WAGS, IVFS…IWHW, GIHL…FGAF, IAAG…FHLS, VLSS…AFVV, and SFAL…HGAR.

This sequence belongs to the PsbB/PsbC family. PsbB subfamily. As to quaternary structure, PSII is composed of 1 copy each of membrane proteins PsbA, PsbB, PsbC, PsbD, PsbE, PsbF, PsbH, PsbI, PsbJ, PsbK, PsbL, PsbM, PsbT, PsbX, PsbY, PsbZ, Psb30/Ycf12, at least 3 peripheral proteins of the oxygen-evolving complex and a large number of cofactors. It forms dimeric complexes. It depends on Binds multiple chlorophylls. PSII binds additional chlorophylls, carotenoids and specific lipids. as a cofactor.

The protein localises to the plastid. It is found in the chloroplast thylakoid membrane. Its function is as follows. One of the components of the core complex of photosystem II (PSII). It binds chlorophyll and helps catalyze the primary light-induced photochemical processes of PSII. PSII is a light-driven water:plastoquinone oxidoreductase, using light energy to abstract electrons from H(2)O, generating O(2) and a proton gradient subsequently used for ATP formation. The protein is Photosystem II CP47 reaction center protein of Carica papaya (Papaya).